Reading from the N-terminus, the 477-residue chain is Glycogen synthase (477 aa).

Position 15 (K15) interacts with ADP-alpha-D-glucose.

The protein belongs to the glycosyltransferase 1 family. Bacterial/plant glycogen synthase subfamily.

The catalysed reaction is [(1-&gt;4)-alpha-D-glucosyl](n) + ADP-alpha-D-glucose = [(1-&gt;4)-alpha-D-glucosyl](n+1) + ADP + H(+). The protein operates within glycan biosynthesis; glycogen biosynthesis. In terms of biological role, synthesizes alpha-1,4-glucan chains using ADP-glucose. The polypeptide is Glycogen synthase (Shigella boydii serotype 18 (strain CDC 3083-94 / BS512)).